Reading from the N-terminus, the 158-residue chain is MVEKVPMTQGGFVKLQEELRWRQQEERPRIIEAIAEARAHGDLSENAEYHAAKEAQSHNEGRITELEDLTARAEVIDLTKMSGDKIKFGAKVKLVDEDTEEEKTYQIVGDQEADVKAGRISISSPIARALIGKEVGDSIEVNAPGGSKAYEILQVSWG.

This sequence belongs to the GreA/GreB family.

In terms of biological role, necessary for efficient RNA polymerase transcription elongation past template-encoded arresting sites. The arresting sites in DNA have the property of trapping a certain fraction of elongating RNA polymerases that pass through, resulting in locked ternary complexes. Cleavage of the nascent transcript by cleavage factors such as GreA or GreB allows the resumption of elongation from the new 3'terminus. GreA releases sequences of 2 to 3 nucleotides. The polypeptide is Transcription elongation factor GreA (Rhizobium etli (strain ATCC 51251 / DSM 11541 / JCM 21823 / NBRC 15573 / CFN 42)).